The sequence spans 745 residues: Polyribonucleotide nucleotidyltransferase (745 aa).

Mg(2+) contacts are provided by Asp-487 and Asp-493. One can recognise a KH domain in the interval Pro-554–Ile-613. The region spanning Gly-623–Lys-691 is the S1 motif domain. Positions Gln-695–Glu-745 are disordered. Over residues Ile-701 to Glu-745 the composition is skewed to basic and acidic residues.

It belongs to the polyribonucleotide nucleotidyltransferase family. Requires Mg(2+) as cofactor.

It localises to the cytoplasm. The catalysed reaction is RNA(n+1) + phosphate = RNA(n) + a ribonucleoside 5'-diphosphate. Its function is as follows. Involved in mRNA degradation. Catalyzes the phosphorolysis of single-stranded polyribonucleotides processively in the 3'- to 5'-direction. The polypeptide is Polyribonucleotide nucleotidyltransferase (Methylorubrum populi (strain ATCC BAA-705 / NCIMB 13946 / BJ001) (Methylobacterium populi)).